The primary structure comprises 133 residues: CDGSH iron-sulfur domain protein (133 aa).

The Lumenal segment spans residues 1-35 (MEPISHLVKSSLPNYLSSLPVPDSIGGWFKLSFKD). A helical membrane pass occupies residues 36–58 (WLALIPPTVVVAGLGYTAYLAYC). Residues 59-133 (PAARASCAAK…DNVGPIVIKK (75 aa)) lie on the Cytoplasmic side of the membrane. Residues C100, C102, C111, and H115 each contribute to the [2Fe-2S] cluster site.

Belongs to the CISD protein family. CISD2 subfamily. [2Fe-2S] cluster is required as a cofactor.

The protein localises to the endoplasmic reticulum membrane. This chain is CDGSH iron-sulfur domain protein, found in Drosophila melanogaster (Fruit fly).